Here is a 975-residue protein sequence, read N- to C-terminus: Glycine dehydrogenase (decarboxylating) (975 aa).

At lysine 723 the chain carries N6-(pyridoxal phosphate)lysine.

This sequence belongs to the GcvP family. As to quaternary structure, the glycine cleavage system is composed of four proteins: P, T, L and H. Pyridoxal 5'-phosphate serves as cofactor.

The catalysed reaction is N(6)-[(R)-lipoyl]-L-lysyl-[glycine-cleavage complex H protein] + glycine + H(+) = N(6)-[(R)-S(8)-aminomethyldihydrolipoyl]-L-lysyl-[glycine-cleavage complex H protein] + CO2. Its function is as follows. The glycine cleavage system catalyzes the degradation of glycine. The P protein binds the alpha-amino group of glycine through its pyridoxal phosphate cofactor; CO(2) is released and the remaining methylamine moiety is then transferred to the lipoamide cofactor of the H protein. The chain is Glycine dehydrogenase (decarboxylating) from Burkholderia thailandensis (strain ATCC 700388 / DSM 13276 / CCUG 48851 / CIP 106301 / E264).